The following is a 326-amino-acid chain: Beta-ketoacyl-[acyl-carrier-protein] synthase III (326 aa).

Catalysis depends on residues Cys-112 and His-251. An ACP-binding region spans residues 252–256 (QANSR). Asn-281 is a catalytic residue.

Belongs to the thiolase-like superfamily. FabH family. As to quaternary structure, homodimer.

The protein resides in the cytoplasm. The enzyme catalyses malonyl-[ACP] + acetyl-CoA + H(+) = 3-oxobutanoyl-[ACP] + CO2 + CoA. The protein operates within lipid metabolism; fatty acid biosynthesis. Functionally, catalyzes the condensation reaction of fatty acid synthesis by the addition to an acyl acceptor of two carbons from malonyl-ACP. Catalyzes the first condensation reaction which initiates fatty acid synthesis and may therefore play a role in governing the total rate of fatty acid production. Possesses both acetoacetyl-ACP synthase and acetyl transacylase activities. Its substrate specificity determines the biosynthesis of branched-chain and/or straight-chain of fatty acids. This Clostridium botulinum (strain Langeland / NCTC 10281 / Type F) protein is Beta-ketoacyl-[acyl-carrier-protein] synthase III.